Consider the following 217-residue polypeptide: Ribonuclease HII (217 aa).

The 190-residue stretch at 26–215 (EIVCGVDEAG…VREALDLMAG (190 aa)) folds into the RNase H type-2 domain. The a divalent metal cation site is built by Asp-32, Glu-33, and Asp-124.

The protein belongs to the RNase HII family. It depends on Mn(2+) as a cofactor. Mg(2+) serves as cofactor.

Its subcellular location is the cytoplasm. The catalysed reaction is Endonucleolytic cleavage to 5'-phosphomonoester.. Its function is as follows. Endonuclease that specifically degrades the RNA of RNA-DNA hybrids. This chain is Ribonuclease HII, found in Burkholderia ambifaria (strain ATCC BAA-244 / DSM 16087 / CCUG 44356 / LMG 19182 / AMMD) (Burkholderia cepacia (strain AMMD)).